We begin with the raw amino-acid sequence, 438 residues long: Putative phospholipase A2 (438 aa).

Ser257 (nucleophile) is an active-site residue. Active-site charge relay system residues include Asp291 and His368.

Belongs to the serine esterase family.

The protein resides in the cytoplasm. It is found in the nucleus. The catalysed reaction is a 1-O-alkyl-2-acetyl-sn-glycero-3-phosphocholine + H2O = a 1-O-alkyl-sn-glycero-3-phosphocholine + acetate + H(+). This chain is Putative phospholipase A2, found in Schizosaccharomyces pombe (strain 972 / ATCC 24843) (Fission yeast).